The primary structure comprises 199 residues: Adenylyl-sulfate kinase (199 aa).

The tract at residues 1–21 is disordered; that stretch reads MSQSSNITWHDSEVTKSDRQQ. The segment covering 10 to 19 has biased composition (basic and acidic residues); that stretch reads HDSEVTKSDR. 34-41 lines the ATP pocket; the sequence is GLSGSGKS. Serine 108 (phosphoserine intermediate) is an active-site residue.

This sequence belongs to the APS kinase family.

It carries out the reaction adenosine 5'-phosphosulfate + ATP = 3'-phosphoadenylyl sulfate + ADP + H(+). It participates in sulfur metabolism; hydrogen sulfide biosynthesis; sulfite from sulfate: step 2/3. Catalyzes the synthesis of activated sulfate. The protein is Adenylyl-sulfate kinase of Staphylococcus haemolyticus (strain JCSC1435).